Reading from the N-terminus, the 74-residue chain is Serine protease inhibitor Kazal-type 7 (74 aa).

The first 17 residues, 1 to 17 (MKLLGGLLLLFTATCLC), serve as a signal peptide directing secretion. The 57-residue stretch at 18 to 74 (NVDCDIYKKYPVVAIPCPIENIPVCGSDYITYGNKCKLCTEILRSNGKIQFLHEGHC) folds into the Kazal-like domain. 3 disulfide bridges follow: cysteine 21/cysteine 56, cysteine 34/cysteine 53, and cysteine 42/cysteine 74.

The protein localises to the secreted. Its function is as follows. Probable serine protease inhibitor. In Rattus norvegicus (Rat), this protein is Serine protease inhibitor Kazal-type 7 (Spink7).